Here is a 227-residue protein sequence, read N- to C-terminus: Translation initiation factor 6 (227 aa).

This sequence belongs to the eIF-6 family.

Functionally, binds to the 50S ribosomal subunit and prevents its association with the 30S ribosomal subunit to form the 70S initiation complex. This chain is Translation initiation factor 6, found in Pyrococcus abyssi (strain GE5 / Orsay).